The following is a 72-amino-acid chain: Conotoxin LvVIA (72 aa).

A signal peptide spans 1 to 17 (VLIIAVLFLTASELVTA). The propeptide occupies 18–41 (DYTRDKWQYRAASLRDAMRNFRDT). 3 cysteine pairs are disulfide-bonded: cysteine 44–cysteine 58, cysteine 51–cysteine 63, and cysteine 57–cysteine 70.

The protein belongs to the conotoxin O1 superfamily. In terms of tissue distribution, expressed by the venom duct.

Its subcellular location is the secreted. The sequence is that of Conotoxin LvVIA from Conus lividus (Livid cone).